A 448-amino-acid chain; its full sequence is Trigger factor (448 aa).

Residues 167–253 enclose the PPIase FKBP-type domain; that stretch reads GSIVRVDFVE…IKDIKKRDIP (87 aa).

This sequence belongs to the FKBP-type PPIase family. Tig subfamily.

The protein localises to the cytoplasm. It carries out the reaction [protein]-peptidylproline (omega=180) = [protein]-peptidylproline (omega=0). Its function is as follows. Involved in protein export. Acts as a chaperone by maintaining the newly synthesized protein in an open conformation. Functions as a peptidyl-prolyl cis-trans isomerase. The polypeptide is Trigger factor (Borrelia hermsii (strain HS1 / DAH)).